Reading from the N-terminus, the 628-residue chain is Putative ankyrin repeat protein L769 (628 aa).

4 ANK repeats span residues asparagine 217–phenylalanine 246, aspartate 333–arginine 362, threonine 421–leucine 451, and asparagine 512–tyrosine 542.

This is Putative ankyrin repeat protein L769 from Acanthamoeba polyphaga mimivirus (APMV).